Consider the following 488-residue polypeptide: Ribulose bisphosphate carboxylase large chain (488 aa).

The substrate site is built by asparagine 127 and threonine 177. Lysine 179 acts as the Proton acceptor in catalysis. Lysine 181 lines the substrate pocket. Positions 205, 207, and 208 each coordinate Mg(2+). The residue at position 205 (lysine 205) is an N6-carboxylysine. Catalysis depends on histidine 297, which acts as the Proton acceptor. Residues arginine 298, histidine 330, and serine 382 each coordinate substrate.

The protein belongs to the RuBisCO large chain family. Type I subfamily. In terms of assembly, heterohexadecamer of 8 large chains and 8 small chains. The cofactor is Mg(2+).

The protein localises to the plastid. It localises to the chloroplast. The catalysed reaction is 2 (2R)-3-phosphoglycerate + 2 H(+) = D-ribulose 1,5-bisphosphate + CO2 + H2O. It carries out the reaction D-ribulose 1,5-bisphosphate + O2 = 2-phosphoglycolate + (2R)-3-phosphoglycerate + 2 H(+). In terms of biological role, ruBisCO catalyzes two reactions: the carboxylation of D-ribulose 1,5-bisphosphate, the primary event in carbon dioxide fixation, as well as the oxidative fragmentation of the pentose substrate in the photorespiration process. Both reactions occur simultaneously and in competition at the same active site. This chain is Ribulose bisphosphate carboxylase large chain (rbcL), found in Porphyra umbilicalis (Purple laver).